The primary structure comprises 85 residues: V-type proton ATPase subunit f (85 aa).

Transmembrane regions (helical) follow at residues 13–33 (CTGL…LFSI) and 56–76 (CLGA…QVIV).

In terms of assembly, V-ATPase is a heteromultimeric enzyme composed of a peripheral catalytic V1 complex (components A to H) attached to an integral membrane V0 proton pore complex (components: a, c, c', c'', d, e, f and VOA1).

It is found in the endoplasmic reticulum membrane. Accessory component of the V0 complex of vacuolar(H+)-ATPase (V-ATPase), a multisubunit enzyme composed of a peripheral complex (V1) that hydrolyzes ATP and a membrane integral complex (V0) that translocates protons. V-ATPase is responsible for acidifying and maintaining the pH of intracellular compartments. The sequence is that of V-type proton ATPase subunit f from Schizosaccharomyces pombe (strain 972 / ATCC 24843) (Fission yeast).